A 101-amino-acid polypeptide reads, in one-letter code: Small ubiquitin-related modifier 1 (101 aa).

N-acetylserine is present on Ser2. Residue Ser2 is modified to Phosphoserine. Residue Lys7 forms a Glycyl lysine isopeptide (Lys-Gly) (interchain with G-Cter in SUMO1); alternate linkage. Lys7 participates in a covalent cross-link: Glycyl lysine isopeptide (Lys-Gly) (interchain with G-Cter in SUMO2); alternate. Phosphoserine is present on Ser9. Residues Lys16, Lys17, and Lys23 each participate in a glycyl lysine isopeptide (Lys-Gly) (interchain with G-Cter in SUMO2) cross-link. Residues 20–97 form the Ubiquitin-like domain; sequence EYIKLKVIGQ…IEVYHEQTGG (78 aa). Residue Lys25 forms a Glycyl lysine isopeptide (Lys-Gly) (interchain with G-Cter in SUMO1) linkage. Ser32 bears the Phosphoserine mark. Residues Lys37, Lys39, Lys45, and Lys46 each participate in a glycyl lysine isopeptide (Lys-Gly) (interchain with G-Cter in SUMO2) cross-link. Gly97 participates in a covalent cross-link: Glycyl lysine isopeptide (Gly-Lys) (interchain with K-? in acceptor proteins). The propeptide occupies 98-101; it reads HSTV.

It belongs to the ubiquitin family. SUMO subfamily. Covalently attached to KCNB1; UBE2I increases cross-linking with KCNB1 and PIAS1 decreases cross-links with KCNB1. Interacts with SAE2, RANBP2, PIAS1 and PIAS2. Interacts with PRKN. Covalently attached to a number of proteins such as IKFZ1, PML, RANGAP1, HIPK2, SP100, p53, p73-alpha, MDM2, JUN, DNMT3B and TDG. Also interacts with HIF1A, HIPK2, HIPK3, CHD3, EXOSC9, RAD51 and RAD52. Interacts with USP25 (via ts SIM domain); the interaction weakly sumoylates USP25. Interacts with SIMC1, CASP8AP2, RNF111 and SOBP (via SIM domains). Interacts with BHLHE40/DEC1. Interacts with RWDD3. Interacts with UBE2I/UBC9 and this interaction is enhanced in the presence of RWDD3. Interacts with MTA1. Interacts with SENP2. Interacts with HINT1. In terms of processing, cleavage of precursor form by SENP1, SENP2 is necessary for function. Post-translationally, polymeric SUMO1 chains undergo polyubiquitination by RNF4.

Its subcellular location is the nucleus membrane. The protein resides in the nucleus speckle. It is found in the cytoplasm. The protein localises to the nucleus. It localises to the PML body. Its subcellular location is the cell membrane. Ubiquitin-like protein that can be covalently attached to proteins as a monomer or a lysine-linked polymer. Covalent attachment via an isopeptide bond to its substrates requires prior activation by the E1 complex SAE1-SAE2 and linkage to the E2 enzyme UBE2I, and can be promoted by E3 ligases such as PIAS1-4, RANBP2 or CBX4. This post-translational modification on lysine residues of proteins plays a crucial role in a number of cellular processes such as nuclear transport, DNA replication and repair, mitosis and signal transduction. Involved for instance in targeting RANGAP1 to the nuclear pore complex protein RANBP2. Covalently attached to the voltage-gated potassium channel KCNB1; this modulates the gating characteristics of KCNB1. Polymeric SUMO1 chains are also susceptible to polyubiquitination which functions as a signal for proteasomal degradation of modified proteins. May also regulate a network of genes involved in palate development. Covalently attached to ZFHX3. This Cervus nippon (Sika deer) protein is Small ubiquitin-related modifier 1 (SUMO1).